A 942-amino-acid polypeptide reads, in one-letter code: Lambda-carrageenase (942 aa).

An N-terminal signal peptide occupies residues 1–25 (MKIKILSAMIASSLLIGCVIPTVKA).

As to quaternary structure, monomer.

The protein resides in the secreted. The enzyme catalyses Endohydrolysis of (1-&gt;4)-beta-linkages in the backbone of lambda-carrageenan, resulting in the tetrasaccharide alpha-D-Galp2,6S2-(1-&gt;3)-beta-D-Galp2S-(1-&gt;4)-alpha-D-Galp2,6S2-(1-&gt;3)-D-Galp2S.. Its function is as follows. Hydrolyzes lambda-carrageenan with inversion of anomeric configuration. Does not hydrolyze iota- and kappa-carrageenans, agarose or porphyran. The protein is Lambda-carrageenase of Pseudoalteromonas sp.